The primary structure comprises 344 residues: Heat-inducible transcription repressor hrcA (344 aa).

This sequence belongs to the HrcA family.

Negative regulator of class I heat shock genes (grpE-dnaK-dnaJ and groELS operons). Prevents heat-shock induction of these operons. The chain is Heat-inducible transcription repressor hrcA from Streptococcus pyogenes serotype M3 (strain ATCC BAA-595 / MGAS315).